Consider the following 415-residue polypeptide: Thylakoid ADP,ATP carrier protein, chloroplastic (415 aa).

A chloroplast-targeting transit peptide spans 1-61 (MGEEKSLLQF…NFASLSVAIR (61 aa)). 5 helical membrane-spanning segments follow: residues 106 to 126 (IALL…AFAG), 182 to 207 (LPQV…KLFR), 219 to 239 (LGAG…LDVL), 273 to 293 (GPSL…FDLV), and 309 to 329 (LLTA…LDTI). 3 Solcar repeats span residues 113 to 205 (PKDA…YKKL), 213 to 296 (LSVL…VKKS), and 307 to 387 (SSLL…VKKL). Arg187 lines the ADP pocket. Arg330 is a binding site for ADP. The helical transmembrane segment at 362 to 388 (GFVPNALKSMPNSSIKLTTFDIVKKLI) threads the bilayer.

This sequence belongs to the mitochondrial carrier (TC 2.A.29) family. Highly expressed in developing photosynthetic organs such as leaves, flower buds and green siliques. Also detected in roots, flowers, mature leaves and stems.

It is found in the plastid. Its subcellular location is the chloroplast thylakoid membrane. It localises to the chloroplast envelope. With respect to regulation, KM and Vmax values toward ATP only are increased by m-chlorocarbonyl cyanide phenylhydrazone (CCCP). The corresponding values for ADP are not affected. In terms of biological role, specifically transports adenine nucleotides. Involved in the uptake of ATP into thylakoids in exchange for lumenal ADP. In Arabidopsis thaliana (Mouse-ear cress), this protein is Thylakoid ADP,ATP carrier protein, chloroplastic (TAAC).